The chain runs to 199 residues: UPF0301 protein Anae109_0457 (199 aa).

The protein belongs to the UPF0301 (AlgH) family.

This is UPF0301 protein Anae109_0457 from Anaeromyxobacter sp. (strain Fw109-5).